The following is a 958-amino-acid chain: Glycine dehydrogenase (decarboxylating) (958 aa).

Position 705 is an N6-(pyridoxal phosphate)lysine (lysine 705).

Belongs to the GcvP family. In terms of assembly, the glycine cleavage system is composed of four proteins: P, T, L and H. Pyridoxal 5'-phosphate is required as a cofactor.

It carries out the reaction N(6)-[(R)-lipoyl]-L-lysyl-[glycine-cleavage complex H protein] + glycine + H(+) = N(6)-[(R)-S(8)-aminomethyldihydrolipoyl]-L-lysyl-[glycine-cleavage complex H protein] + CO2. The glycine cleavage system catalyzes the degradation of glycine. The P protein binds the alpha-amino group of glycine through its pyridoxal phosphate cofactor; CO(2) is released and the remaining methylamine moiety is then transferred to the lipoamide cofactor of the H protein. The protein is Glycine dehydrogenase (decarboxylating) of Synechococcus sp. (strain CC9902).